The sequence spans 513 residues: Cytochrome P450 71D445 (513 aa).

Residues 12–28 (SEWAITSTITLLFLILL) form a helical; Signal-anchor for type II membrane protein membrane-spanning segment. Residue C450 participates in heme binding.

This sequence belongs to the cytochrome P450 family. Heme serves as cofactor. Expressed in mature seeds.

The protein resides in the membrane. The enzyme catalyses (-)-casbene + reduced [NADPH--hemoprotein reductase] + O2 = 8-hydroxycasbene + oxidized [NADPH--hemoprotein reductase] + H2O + H(+). It catalyses the reaction 4-hydroxycasbene + reduced [NADPH--hemoprotein reductase] + O2 = 4,8-dihydroxycasbene + oxidized [NADPH--hemoprotein reductase] + H2O + H(+). It carries out the reaction 4,8-dihydroxycasbene + reduced [NADPH--hemoprotein reductase] + O2 = 4,5,8-trihydroxycasbene + oxidized [NADPH--hemoprotein reductase] + H2O + H(+). The protein operates within secondary metabolite biosynthesis; terpenoid biosynthesis. Involved in the biosynthesis of macrocyclic lathyrane type diterpenoids (also called Euphorbia factors) natural products, including the cyclization route from casbene to jolkinol C, a precursor for ingenol mebutate that is used to treat actinic keratosis, a precancerous skin condition. Catalyzes the hydroxylation of (-)-casbene and 4-hydroxycasbene to produce 8-hydroxycasbene and 4,8-dihydroxycasbene, respectively. Also mediates the formation of 4-hydroxy-8-ketocasbene from 4,8-dihydroxycasbene. Together with ADH1, triggers the biosynthesis of 8-ketocasbene from 8-hydroxycasbene. The chain is Cytochrome P450 71D445 from Euphorbia lathyris (Caper spurge).